We begin with the raw amino-acid sequence, 155 residues long: Ribosomal RNA large subunit methyltransferase H (155 aa).

Position 103 (Gly103) interacts with S-adenosyl-L-methionine.

It belongs to the RNA methyltransferase RlmH family. In terms of assembly, homodimer.

The protein localises to the cytoplasm. The enzyme catalyses pseudouridine(1915) in 23S rRNA + S-adenosyl-L-methionine = N(3)-methylpseudouridine(1915) in 23S rRNA + S-adenosyl-L-homocysteine + H(+). Specifically methylates the pseudouridine at position 1915 (m3Psi1915) in 23S rRNA. The chain is Ribosomal RNA large subunit methyltransferase H from Caulobacter vibrioides (strain ATCC 19089 / CIP 103742 / CB 15) (Caulobacter crescentus).